A 237-amino-acid chain; its full sequence is Orotidine 5'-phosphate decarboxylase (237 aa).

Substrate-binding positions include aspartate 11, lysine 34, 61-70 (DLKLHDIPNT), threonine 124, arginine 186, glutamine 195, glycine 215, and arginine 216. Lysine 63 (proton donor) is an active-site residue.

The protein belongs to the OMP decarboxylase family. Type 1 subfamily. As to quaternary structure, homodimer.

The catalysed reaction is orotidine 5'-phosphate + H(+) = UMP + CO2. It participates in pyrimidine metabolism; UMP biosynthesis via de novo pathway; UMP from orotate: step 2/2. In terms of biological role, catalyzes the decarboxylation of orotidine 5'-monophosphate (OMP) to uridine 5'-monophosphate (UMP). This Lactococcus lactis subsp. cremoris (strain SK11) protein is Orotidine 5'-phosphate decarboxylase.